Consider the following 331-residue polypeptide: Ketol-acid reductoisomerase (NADP(+)) (331 aa).

Residues 1–181 (MKVYYEKDAN…GGSRSGVIET (181 aa)) form the KARI N-terminal Rossmann domain. Residues 24–27 (YGSQ), arginine 47, and 82–85 (DQVQ) each bind NADP(+). Histidine 107 is a catalytic residue. NADP(+) is bound at residue glycine 133. The KARI C-terminal knotted domain occupies 182 to 327 (TFREETETDL…GELRGMMPWL (146 aa)). Residues aspartate 190, glutamate 194, glutamate 226, and glutamate 230 each coordinate Mg(2+). Position 251 (serine 251) interacts with substrate.

This sequence belongs to the ketol-acid reductoisomerase family. The cofactor is Mg(2+).

It catalyses the reaction (2R)-2,3-dihydroxy-3-methylbutanoate + NADP(+) = (2S)-2-acetolactate + NADPH + H(+). It carries out the reaction (2R,3R)-2,3-dihydroxy-3-methylpentanoate + NADP(+) = (S)-2-ethyl-2-hydroxy-3-oxobutanoate + NADPH + H(+). Its pathway is amino-acid biosynthesis; L-isoleucine biosynthesis; L-isoleucine from 2-oxobutanoate: step 2/4. It functions in the pathway amino-acid biosynthesis; L-valine biosynthesis; L-valine from pyruvate: step 2/4. Involved in the biosynthesis of branched-chain amino acids (BCAA). Catalyzes an alkyl-migration followed by a ketol-acid reduction of (S)-2-acetolactate (S2AL) to yield (R)-2,3-dihydroxy-isovalerate. In the isomerase reaction, S2AL is rearranged via a Mg-dependent methyl migration to produce 3-hydroxy-3-methyl-2-ketobutyrate (HMKB). In the reductase reaction, this 2-ketoacid undergoes a metal-dependent reduction by NADPH to yield (R)-2,3-dihydroxy-isovalerate. The sequence is that of Ketol-acid reductoisomerase (NADP(+)) from Nitratidesulfovibrio vulgaris (strain ATCC 29579 / DSM 644 / CCUG 34227 / NCIMB 8303 / VKM B-1760 / Hildenborough) (Desulfovibrio vulgaris).